Here is a 177-residue protein sequence, read N- to C-terminus: MTIHIFLCFLLILKIVNALKSNRFSSYIYTPKTFLYNNKSIPNKKLVRKFVNRIKLVDDTIKSNEHIIKITDNATNKIKELQKECNDDYLILKLYVENGGCKGLKYKLNPIKKNEIEEDDYIQQFDELKFILSIDSTSVIYIYNNTLDYSNDLISGGFKFINPNATKKCGCGKSFNV.

An N-terminal signal peptide occupies residues 1 to 18 (MTIHIFLCFLLILKIVNA). Positions 101, 169, and 171 each coordinate [4Fe-4S] cluster.

Belongs to the HesB/IscA family. As to quaternary structure, homodimer. Homotetramer formation is observed in vitro.

The protein localises to the plastid. The protein resides in the apicoplast. It functions in the pathway cofactor biosynthesis; iron-sulfur cluster biosynthesis. Its function is as follows. Participates in the sulfur mobilization (SUF) pathway for iron-sulfur (Fe-S) cluster biogenesis. Involved in the pre-assembly of [4Fe-4S] clusters and their transfer to target proteins. This Plasmodium falciparum (isolate 3D7) protein is Iron-sulfur cluster assembly protein SufA.